Consider the following 388-residue polypeptide: Alanine racemase (388 aa).

Lys-44 serves as the catalytic Proton acceptor; specific for D-alanine. At Lys-44 the chain carries N6-(pyridoxal phosphate)lysine. Arg-142 provides a ligand contact to substrate. Tyr-273 serves as the catalytic Proton acceptor; specific for L-alanine. Met-321 lines the substrate pocket.

It belongs to the alanine racemase family. The cofactor is pyridoxal 5'-phosphate.

The catalysed reaction is L-alanine = D-alanine. The protein operates within amino-acid biosynthesis; D-alanine biosynthesis; D-alanine from L-alanine: step 1/1. Its function is as follows. Catalyzes the interconversion of L-alanine and D-alanine. May also act on other amino acids. The chain is Alanine racemase (alr) from Mycobacterium avium (strain 104).